The chain runs to 103 residues: Pyrimidine/purine nucleoside phosphorylase (103 aa).

Belongs to the nucleoside phosphorylase PpnP family.

The enzyme catalyses a purine D-ribonucleoside + phosphate = a purine nucleobase + alpha-D-ribose 1-phosphate. It carries out the reaction adenosine + phosphate = alpha-D-ribose 1-phosphate + adenine. The catalysed reaction is cytidine + phosphate = cytosine + alpha-D-ribose 1-phosphate. It catalyses the reaction guanosine + phosphate = alpha-D-ribose 1-phosphate + guanine. The enzyme catalyses inosine + phosphate = alpha-D-ribose 1-phosphate + hypoxanthine. It carries out the reaction thymidine + phosphate = 2-deoxy-alpha-D-ribose 1-phosphate + thymine. The catalysed reaction is uridine + phosphate = alpha-D-ribose 1-phosphate + uracil. It catalyses the reaction xanthosine + phosphate = alpha-D-ribose 1-phosphate + xanthine. Catalyzes the phosphorolysis of diverse nucleosides, yielding D-ribose 1-phosphate and the respective free bases. Can use uridine, adenosine, guanosine, cytidine, thymidine, inosine and xanthosine as substrates. Also catalyzes the reverse reactions. This Sulfurovum sp. (strain NBC37-1) protein is Pyrimidine/purine nucleoside phosphorylase.